The primary structure comprises 611 residues: MSEIPSTIVSKNMTNDKNSLESMNISSSSSTEENPKKQARKNEEHGPDPSANPFHLSGDVDFFLLRDQERNKALSERQQQKTMRVHQKMTYSSKVSAKHTSLRRQLQLEDKQEDLEARAEAEHQRAFRDYTTWKLTLTKEKNVEPENMSGYIKQKRQMFLLQYALDVKRREIQRLETLATKEEARLERAEKSLEKDAALFDEFVRENDCSSVQAMRAAEKETKAKIEKILEIRDLTTQIVNIKSEISRFEDTLKHYKVYKDFLYKLSPKEWLEEQEKKHSFLKKAKEVSEASKESSVNSTPGDKGPGIKGKASSMWAKEGQGTKKPWRFLQTMRLGRSPSYLSSPQQGSQPSESSGGDSRGSNSPIPPTQEDTDSDGEEPQLYFTEPQQLLDVFRELEEQNLSLIQNSQETEKTLEELSHTLKHTQIRMDREVNQLKQWVTTMMMSITKEEDTAAELELKARVFHFGEYKGDQQDKLLESLNCKVLDVYRHCTGTQQEANLGTVQMLTIIEHQLDELLENLEHVPQVKIEQAERAKEKERRIRLREEKLQMQKILQEEHLQRARARAQAEIKKKRGRTLVCRSRPPAHRIKQQSEHTLMDKEEEELLFFFT.

Positions 1-17 (MSEIPSTIVSKNMTNDK) are enriched in polar residues. Residues 1–57 (MSEIPSTIVSKNMTNDKNSLESMNISSSSSTEENPKKQARKNEEHGPDPSANPFHLS) form a disordered region. The span at 20 to 32 (LESMNISSSSSTE) shows a compositional bias: low complexity. The segment covering 33–47 (ENPKKQARKNEEHGP) has biased composition (basic and acidic residues). 3 coiled-coil regions span residues 101–128 (SLRR…RAFR), 164–203 (ALDV…FDEF), and 230–257 (LEIR…KHYK). 2 disordered regions span residues 287–323 (EVSE…GQGT) and 338–380 (SPSY…GEEP). Residues 338 to 357 (SPSYLSSPQQGSQPSESSGG) are compositionally biased toward low complexity. Coiled-coil stretches lie at residues 393–432 (VFRE…MDRE) and 526–578 (QVKI…RGRT).

The protein belongs to the CFAP100 family.

Its subcellular location is the cytoplasm. The protein resides in the cytoskeleton. The protein localises to the cilium axoneme. May play a role in ciliary/flagellar motility by regulating the assembly and the activity of axonemal inner dynein arm. The chain is Cilia- and flagella-associated protein 100 from Homo sapiens (Human).